Here is a 250-residue protein sequence, read N- to C-terminus: Probable dihydroorotate dehydrogenase B (NAD(+)), electron transfer subunit (250 aa).

Residues 1 to 89 (MNRITVDQVR…RGPYGNGFQI (89 aa)) enclose the FAD-binding FR-type domain. [2Fe-2S] cluster is bound by residues Cys-200, Cys-205, Cys-208, and Cys-216.

This sequence belongs to the PyrK family. As to quaternary structure, heterotetramer of 2 PyrK and 2 PyrD type B subunits. The cofactor is [2Fe-2S] cluster. It depends on FAD as a cofactor.

The protein operates within pyrimidine metabolism; UMP biosynthesis via de novo pathway; orotate from (S)-dihydroorotate (NAD(+) route): step 1/1. In terms of biological role, responsible for channeling the electrons from the oxidation of dihydroorotate from the FMN redox center in the PyrD type B subunit to the ultimate electron acceptor NAD(+). The polypeptide is Probable dihydroorotate dehydrogenase B (NAD(+)), electron transfer subunit (Thermoplasma acidophilum (strain ATCC 25905 / DSM 1728 / JCM 9062 / NBRC 15155 / AMRC-C165)).